Consider the following 490-residue polypeptide: Protein U94 (490 aa).

The PV NS1-Nuc domain occupies 1 to 210 (MFSIINPSDD…SHFNKKPNVK (210 aa)).

The protein localises to the host nucleus. The chain is Protein U94 (U94) from Human herpesvirus 6A (strain Uganda-1102) (HHV-6 variant A).